Here is a 160-residue protein sequence, read N- to C-terminus: GPI-anchored protein LLG3 (160 aa).

The signal sequence occupies residues 1–23; it reads MKITHHCLVSLLSILLLSGFAFS. Asparagine 56 carries N-linked (GlcNAc...) asparagine glycosylation. Serine 137 carries the GPI-anchor amidated serine lipid modification. The propeptide at 138–160 is removed in mature form; sequence HASIPLVSTHVLLITVSILFHLF.

In terms of tissue distribution, expressed in pollen, pollen tubes, sporophytic pistil tissues, in the early stages of female gametophyte development, and in unfertilized, mature ovules.

It localises to the cell membrane. The sequence is that of GPI-anchored protein LLG3 from Arabidopsis thaliana (Mouse-ear cress).